Reading from the N-terminus, the 364-residue chain is SH3 and cysteine-rich domain-containing protein 3 (364 aa).

Disordered regions lie at residues 1-89 (MTEK…NDKP) and 189-244 (NKER…HKQP). A compositionally biased stretch (acidic residues) spans 64-78 (YEEEEEEEEEEEEPP). The Phorbol-ester/DAG-type zinc-finger motif lies at 89-140 (PHKFKDHFFKKPKFCDVCARMIVLNNKFGLRCKNCKTNIHEHCQSYVEMQRC). Over residues 212–242 (ESARPEEGKPQDGNPEGDKKAEKKTPDDKHK) the composition is skewed to basic and acidic residues. SH3 domains are found at residues 247 to 306 (QQSH…RVRA) and 307 to 364 (GERV…LEEI).

In terms of assembly, interacts (via SH3 domains) with the calcium channels CACNA1S and CACNA1C. Component of a calcium channel complex with CACNA1S and CACNB1. Component of a calcium channel complex with CACNA1C and CACNB1.

The protein resides in the cytoplasm. The protein localises to the cell membrane. Its subcellular location is the sarcolemma. It is found in the T-tubule. Functionally, required for normal excitation-contraction coupling in skeletal muscle and for normal muscle contraction in response to membrane depolarization. Required for normal Ca(2+) release from the sarcplasmic reticulum, which ultimately leads to muscle contraction. Probably functions via its effects on muscle calcium channels. Increases CACNA1S channel activity, in addition to its role in enhancing the expression of CACNA1S at the cell membrane. Has a redundant role in promoting the expression of the calcium channel CACNA1S at the cell membrane. Slows down the inactivation rate of the calcium channel CACNA1C. The chain is SH3 and cysteine-rich domain-containing protein 3 (STAC3) from Homo sapiens (Human).